The chain runs to 214 residues: Adenylate kinase (214 aa).

10-15 lines the ATP pocket; it reads GAGKGT. The tract at residues 30 to 59 is NMP; it reads CTGDMLRAAVKAGSELGLKAKEIMDAGKLV. AMP contacts are provided by residues threonine 31, arginine 36, 57–59, 85–88, and glutamine 92; these read KLV and GFPR. The LID stretch occupies residues 122-159; it reads GRRVHAASGRVYHIKFNPPKVEDKDDVTGEELTIRKDD. Residues arginine 123 and 132 to 133 each bind ATP; that span reads VY. AMP-binding residues include arginine 156 and arginine 167. Residue arginine 200 coordinates ATP.

This sequence belongs to the adenylate kinase family. In terms of assembly, monomer.

It is found in the cytoplasm. It carries out the reaction AMP + ATP = 2 ADP. The protein operates within purine metabolism; AMP biosynthesis via salvage pathway; AMP from ADP: step 1/1. Catalyzes the reversible transfer of the terminal phosphate group between ATP and AMP. Plays an important role in cellular energy homeostasis and in adenine nucleotide metabolism. The sequence is that of Adenylate kinase from Yersinia enterocolitica.